We begin with the raw amino-acid sequence, 501 residues long: AKT kinase-transforming protein (501 aa).

A PH domain is found at 26–129; that stretch reads AIVKEGWLHK…WATAIQTVAD (104 aa). The interval 135–158 is disordered; that stretch reads EEETMDFRSGSPSDNSGAEEMEVS. The region spanning 171-429 is the Protein kinase domain; sequence FEYLKLLGKG…AKEIMQHRFF (259 aa). Residues 177–185 and Lys-200 contribute to the ATP site; that span reads LGKGTFGKV. The active-site Proton acceptor is Asp-295. The residue at position 347 (Tyr-347) is a Phosphotyrosine. Residues 430–501 form the AGC-kinase C-terminal domain; it reads ANIVWQDVYE…QFSYSASGTA (72 aa). Residues 471 to 501 are disordered; sequence TPPDQDDSMECVDSERRPHFPQFSYSASGTA.

Belongs to the protein kinase superfamily. AGC Ser/Thr protein kinase family. RAC subfamily. As to quaternary structure, interacts with mouse THEM4. In terms of processing, autophosphorylated on threonine and serine residues.

The catalysed reaction is L-seryl-[protein] + ATP = O-phospho-L-seryl-[protein] + ADP + H(+). The enzyme catalyses L-threonyl-[protein] + ATP = O-phospho-L-threonyl-[protein] + ADP + H(+). In Mus musculus (Mouse), this protein is AKT kinase-transforming protein (V-AKT).